The primary structure comprises 261 residues: ATP synthase subunit a (261 aa).

Helical transmembrane passes span 45–65 (ITNVTMWMAIAVLVIAAILVL), 107–127 (VMTLFLFVLCGNVLGLLPLSF), 133–153 (MAVTVPLALMVFVGVTALGFM), 162–182 (MFWVTSAPLAIRPVLAVIEVI), 209–229 (IAGFASIAVVSPVVVGAVTAI), and 232–252 (LELLVAVVQAYVFTILTCVYL).

This sequence belongs to the ATPase A chain family. As to quaternary structure, F-type ATPases have 2 components, CF(1) - the catalytic core - and CF(0) - the membrane proton channel. CF(1) has five subunits: alpha(3), beta(3), gamma(1), delta(1), epsilon(1). CF(0) has four main subunits: a, b, b' and c.

The protein resides in the cell inner membrane. Key component of the proton channel; it plays a direct role in the translocation of protons across the membrane. In Cereibacter sphaeroides (strain ATCC 17025 / ATH 2.4.3) (Rhodobacter sphaeroides), this protein is ATP synthase subunit a.